The chain runs to 94 residues: UPF0768 protein YBL029C-A (94 aa).

This sequence belongs to the UPF0768 family.

The protein localises to the cell membrane. This chain is UPF0768 protein YBL029C-A, found in Saccharomyces cerevisiae (strain ATCC 204508 / S288c) (Baker's yeast).